The following is a 238-amino-acid chain: 7-cyano-7-deazaguanine synthase (238 aa).

14 to 24 is a binding site for ATP; sequence FSGGQDSATCL. Residues C202, C217, C220, and C223 each contribute to the Zn(2+) site.

The protein belongs to the QueC family. Requires Zn(2+) as cofactor.

It carries out the reaction 7-carboxy-7-deazaguanine + NH4(+) + ATP = 7-cyano-7-deazaguanine + ADP + phosphate + H2O + H(+). It participates in purine metabolism; 7-cyano-7-deazaguanine biosynthesis. Catalyzes the ATP-dependent conversion of 7-carboxy-7-deazaguanine (CDG) to 7-cyano-7-deazaguanine (preQ(0)). In Nitrobacter hamburgensis (strain DSM 10229 / NCIMB 13809 / X14), this protein is 7-cyano-7-deazaguanine synthase.